We begin with the raw amino-acid sequence, 920 residues long: DNA ligase (920 aa).

NAD(+) contacts are provided by residues 90 to 94 (DAAYD), 139 to 140 (SL), and E173. Catalysis depends on K175, which acts as the N6-AMP-lysine intermediate. Residues R196, E235, K360, and K384 each coordinate NAD(+). Zn(2+) is bound by residues C481, C484, C500, and C506. Residues 662–691 (GEAAIESAETQGDTASETTGAPTGAEAPLG) are disordered. A compositionally biased stretch (polar residues) spans 669–682 (AETQGDTASETTGA). Residues 839–920 (SLPQTLAGKT…FAQLLATGTI (82 aa)) enclose the BRCT domain.

Belongs to the NAD-dependent DNA ligase family. LigA subfamily. Mg(2+) is required as a cofactor. The cofactor is Mn(2+).

It carries out the reaction NAD(+) + (deoxyribonucleotide)n-3'-hydroxyl + 5'-phospho-(deoxyribonucleotide)m = (deoxyribonucleotide)n+m + AMP + beta-nicotinamide D-nucleotide.. Its function is as follows. DNA ligase that catalyzes the formation of phosphodiester linkages between 5'-phosphoryl and 3'-hydroxyl groups in double-stranded DNA using NAD as a coenzyme and as the energy source for the reaction. It is essential for DNA replication and repair of damaged DNA. The protein is DNA ligase of Bifidobacterium longum (strain DJO10A).